The sequence spans 585 residues: A-type ATP synthase subunit A (585 aa).

237–244 (GPFGSGKT) contacts ATP.

Belongs to the ATPase alpha/beta chains family. Has multiple subunits with at least A(3), B(3), C, D, E, F, H, I and proteolipid K(x).

It localises to the cell membrane. The enzyme catalyses ATP + H2O + 4 H(+)(in) = ADP + phosphate + 5 H(+)(out). Component of the A-type ATP synthase that produces ATP from ADP in the presence of a proton gradient across the membrane. The A chain is the catalytic subunit. The polypeptide is A-type ATP synthase subunit A (Natronomonas pharaonis (strain ATCC 35678 / DSM 2160 / CIP 103997 / JCM 8858 / NBRC 14720 / NCIMB 2260 / Gabara) (Halobacterium pharaonis)).